A 291-amino-acid chain; its full sequence is uncharacterized protein (291 aa).

Its function is as follows. Essential for virus function. This is an uncharacterized protein from Sulfolobus spindle-shape virus 1 (SSV1).